The sequence spans 226 residues: Protein AF-9 homolog (226 aa).

A YEATS domain is found at 8–169 (RIKTLSVSRP…EEFFKILMSR (162 aa)). Positions 187-224 (QLEQEEIDRIEIGIEKVDKEIDELKQKLENLVKQEAIN) form a coiled coil.

As to quaternary structure, component of the SWR1 chromatin-remodeling complex composed of at least ACT1, ARP4, RVB1, RVB2, ARP6, YAF9, VPS71, VPS72, SWC3, SWC4, SWC5, SWC7 and SWR1, and perhaps BDF1. Component of the NuA4 histone acetyltransferase complex composed of at least ACT1, ARP4, YAF9, VID21, SWC4, EAF3, EAF5, EAF6, EAF7, EPL1, ESA1, TRA1 and YNG2. Interacts with SWC4.

It localises to the cytoplasm. It is found in the nucleus. Its function is as follows. Component of the SWR1 complex which mediates the ATP-dependent exchange of histone H2A for the H2A variant HZT1 leading to transcriptional regulation of selected genes by chromatin remodeling. Component of the NuA4 histone acetyltransferase complex which is involved in transcriptional activation of selected genes principally by acetylation of nucleosomal histones H4 and H2A. The NuA4 complex is also involved in DNA repair. Yaf9 may also be required for viability in conditions in which the structural integrity of the spindle is compromised. In Saccharomyces cerevisiae (strain ATCC 204508 / S288c) (Baker's yeast), this protein is Protein AF-9 homolog (YAF9).